A 147-amino-acid polypeptide reads, in one-letter code: Flagellar assembly factor FliW (147 aa).

This sequence belongs to the FliW family. Interacts with translational regulator CsrA and flagellin(s).

The protein localises to the cytoplasm. In terms of biological role, acts as an anti-CsrA protein, binds CsrA and prevents it from repressing translation of its target genes, one of which is flagellin. Binds to flagellin and participates in the assembly of the flagellum. This Treponema denticola (strain ATCC 35405 / DSM 14222 / CIP 103919 / JCM 8153 / KCTC 15104) protein is Flagellar assembly factor FliW.